We begin with the raw amino-acid sequence, 687 residues long: DNA-directed RNA polymerase subunit beta' (687 aa).

Zn(2+) contacts are provided by Cys-69, Cys-71, Cys-87, and Cys-90. Mg(2+) contacts are provided by Asp-492, Asp-494, and Asp-496.

The protein belongs to the RNA polymerase beta' chain family. RpoC1 subfamily. In plastids the minimal PEP RNA polymerase catalytic core is composed of four subunits: alpha, beta, beta', and beta''. When a (nuclear-encoded) sigma factor is associated with the core the holoenzyme is formed, which can initiate transcription. Mg(2+) is required as a cofactor. Zn(2+) serves as cofactor.

The protein resides in the plastid. It is found in the chloroplast. The enzyme catalyses RNA(n) + a ribonucleoside 5'-triphosphate = RNA(n+1) + diphosphate. Functionally, DNA-dependent RNA polymerase catalyzes the transcription of DNA into RNA using the four ribonucleoside triphosphates as substrates. The protein is DNA-directed RNA polymerase subunit beta' of Silene latifolia (White campion).